Reading from the N-terminus, the 657-residue chain is MRLKIGFILRSLLVVGSFLGLVVLWSSLSSRPDDPSPLSRMREDRDVNNPLPNRGGNGLAPGDDRFKPVVPWPHVEGVEVDLESIRRKNKAKNEQERHAGGDSQKDIMQRQYLTFKPQTFTYRDPVLRPGVLGNFEPKEPEPHGVVGGPGENAKPLVLGPEYKQAAQASIKEFGFNMAASDMISLDRSVNDLRQEECKYWHYDENLLTSSVVIVFHNEGWSTLMRTVHSVIKRTPRKYLAEIVLIDDFSNKEHLKEKLTEYIKLWNGLVKVFRNERREGLIQARSIGAQKAKLGQVLIYLDAHCEVAVNWYAPLVAPISKDRTICTVPIIDVINGNTYEIIPQGGGDEDGYARGAWDWSMLWKRVPLTPREKRLRKTKTEPYRSPAMAGGLFAIERDFFFELGLYDPGLQIWGGENFEISYKIWQCGGKLLFVPCSRVGHIYRLEGWQGNPPPLYVGSSPTLKNYVRVVEVWWDEYKDYFYASRPESKALPYGDISELKKFREDHNCKSFKWFMEEIAYDITAHYPLPPRNVEWGEIRGLETAYCIDSMGKTNGGFVELGPCHRMGGNQLFRINEANQLMQYDQCLTKGPDGSKVMITHCNLNEFKEWQYFKNLHRFTHIASGKCLDRSEVLHQVFISSCDNGKMTQKWEMNNIHSV.

Residues 1–6 (MRLKIG) lie on the Cytoplasmic side of the membrane. A helical; Signal-anchor for type II membrane protein transmembrane segment spans residues 7 to 29 (FILRSLLVVGSFLGLVVLWSSLS). The tract at residues 30–66 (SRPDDPSPLSRMREDRDVNNPLPNRGGNGLAPGDDRF) is disordered. The Lumenal segment spans residues 30–657 (SRPDDPSPLS…KWEMNNIHSV (628 aa)). Intrachain disulfides connect C197–C435, C426–C507, C545–C562, C585–C600, and C625–C640. A catalytic subdomain A region spans residues 206 to 317 (LLTSSVVIVF…VNWYAPLVAP (112 aa)). Residues D247 and R277 each contribute to the substrate site. Mn(2+) contacts are provided by D301 and H303. The catalytic subdomain B stretch occupies residues 381–443 (PYRSPAMAGG…PCSRVGHIYR (63 aa)). Residue W412 participates in substrate binding. Residue H440 participates in Mn(2+) binding. R443 serves as a coordination point for substrate. The 121-residue stretch at 532-652 (VEWGEIRGLE…GKMTQKWEMN (121 aa)) folds into the Ricin B-type lectin domain.

This sequence belongs to the glycosyltransferase 2 family. GalNAc-T subfamily. It depends on Mn(2+) as a cofactor. As to expression, highly expressed in sublingual gland. Expressed at lower level in stomach, small intestiine and colon.

It localises to the golgi apparatus membrane. It carries out the reaction L-seryl-[protein] + UDP-N-acetyl-alpha-D-galactosamine = a 3-O-[N-acetyl-alpha-D-galactosaminyl]-L-seryl-[protein] + UDP + H(+). The enzyme catalyses L-threonyl-[protein] + UDP-N-acetyl-alpha-D-galactosamine = a 3-O-[N-acetyl-alpha-D-galactosaminyl]-L-threonyl-[protein] + UDP + H(+). It participates in protein modification; protein glycosylation. In terms of biological role, glycopeptide transferase involved in O-linked oligosaccharide biosynthesis, which catalyzes the transfer of an N-acetyl-D-galactosamine residue to an already glycosylated peptide. In contrast to other proteins of the family, it does not act as a peptide transferase that transfers GalNAc onto serine or threonine residue on the protein receptor, but instead requires the prior addition of a GalNAc on a peptide before adding additional GalNAc moieties. Some peptide transferase activity is however not excluded, considering that its appropriate peptide substrate may remain unidentified. This chain is N-acetylgalactosaminyltransferase 7 (Galnt7), found in Rattus norvegicus (Rat).